The following is a 290-amino-acid chain: UPF0750 membrane protein YdeO (290 aa).

A run of 5 helical transmembrane segments spans residues 18-38 (IIMV…VLIP), 56-76 (LFNL…VWLG), 83-103 (SFAL…SFFH), 112-132 (DTLL…GLAL), and 165-185 (LFVF…LSVI).

This sequence belongs to the UPF0750 family.

The protein resides in the cell membrane. This is UPF0750 membrane protein YdeO (ydeO) from Bacillus subtilis (strain 168).